The following is a 476-amino-acid chain: Aspartyl/glutamyl-tRNA(Asn/Gln) amidotransferase subunit B (476 aa).

Belongs to the GatB/GatE family. GatB subfamily. As to quaternary structure, heterotrimer of A, B and C subunits.

The catalysed reaction is L-glutamyl-tRNA(Gln) + L-glutamine + ATP + H2O = L-glutaminyl-tRNA(Gln) + L-glutamate + ADP + phosphate + H(+). The enzyme catalyses L-aspartyl-tRNA(Asn) + L-glutamine + ATP + H2O = L-asparaginyl-tRNA(Asn) + L-glutamate + ADP + phosphate + 2 H(+). Its function is as follows. Allows the formation of correctly charged Asn-tRNA(Asn) or Gln-tRNA(Gln) through the transamidation of misacylated Asp-tRNA(Asn) or Glu-tRNA(Gln) in organisms which lack either or both of asparaginyl-tRNA or glutaminyl-tRNA synthetases. The reaction takes place in the presence of glutamine and ATP through an activated phospho-Asp-tRNA(Asn) or phospho-Glu-tRNA(Gln). This Clostridium botulinum (strain Langeland / NCTC 10281 / Type F) protein is Aspartyl/glutamyl-tRNA(Asn/Gln) amidotransferase subunit B.